We begin with the raw amino-acid sequence, 211 residues long: Suppressor of cytokine signaling 1 (211 aa).

The interval 1–53 is disordered; it reads MVAHNQVAADNAVSTAAEPRRRPEPSSSSSSSPAAPARPRPCPAVPAPAPGDT. Low complexity predominate over residues 25–35; it reads PSSSSSSSPAA. Residues 36–49 show a composition bias toward pro residues; the sequence is PARPRPCPAVPAPA. Positions 55–66 are kinase inhibitory region (KIR); the sequence is FRTFRSHADYRR. The extended SH2 subdomain (ESS) stretch occupies residues 67-78; the sequence is ITRASALLDACG. Residues 79 to 174 form the SH2 domain; the sequence is FYWGPLSVHG…PLRQRRVRPL (96 aa). The SOCS box domain maps to 161–210; that stretch reads MLGAPLRQRRVRPLQELCRQRIVATVGRENLARIPLNPVLRDYLSSFPFQ. The tract at residues 173–182 is interaction with Elongin BC complex; it reads PLQELCRQRI.

It belongs to the SOCS1 family. As to quaternary structure, interacts with multiple activated signaling proteins of the tyrosine kinase signaling pathway including JAK family kinases, TEC, KIT, GRB2 and VAV. Binding to JAKs is mediated through the KIR and SH2 domains to a phosphorylated tyrosine residue within the JAK JH1 domain. Binds the SH3 domain of GRB2 via diproline determinants in the N-terminus, and the N-terminal regulatory domain of VAV. Interacts with the Elongin BC complex (ELOB and ELOC). Component of an ECS CBC(SOCS1) E3 ubiquitin-protein ligase complex which contains Elongin BC, CUL5, RBX1 and SOCS1. Interacts (via SH2 domain and SOCS box) with TRIM8. Interacts with AXL, CUL2 and FGFR3. Interacts with INSR. Interacts with TRIM8. Interacts with DCUN1D1. Interacts with IFNGR1. As to expression, expressed in all tissues with high expression in spleen, small intestine and peripheral blood leukocytes.

It localises to the nucleus. The protein localises to the cytoplasmic vesicle. The protein operates within protein modification; protein ubiquitination. Its function is as follows. Essential negative regulator of type I and type II interferon (IFN) signaling, as well as that of other cytokines, including IL2, IL4, IL6 and leukemia inhibitory factor (LIF). Downregulates cytokine signaling by inhibiting the JAK/STAT signaling pathway. Acts by binding to JAK proteins and to IFNGR1 and inhibiting their kinase activity. In vitro, suppresses Tec protein-tyrosine activity. Regulates IFN-gamma (IFNG)-mediated sensory neuron survival. Probable substrate recognition component of an ECS (Elongin BC-CUL2/5-SOCS-box protein) E3 ubiquitin ligase complex which mediates the ubiquitination and subsequent proteasomal degradation of target proteins. This Homo sapiens (Human) protein is Suppressor of cytokine signaling 1 (SOCS1).